The sequence spans 213 residues: Thymidylate kinase (213 aa).

10–17 (GLEGAGKT) is an ATP binding site.

Belongs to the thymidylate kinase family.

It catalyses the reaction dTMP + ATP = dTDP + ADP. Its function is as follows. Phosphorylation of dTMP to form dTDP in both de novo and salvage pathways of dTTP synthesis. The protein is Thymidylate kinase of Shigella boydii serotype 18 (strain CDC 3083-94 / BS512).